The following is a 203-amino-acid chain: Small ribosomal subunit protein uS4 (203 aa).

The S4 RNA-binding domain maps to 92–152 (LRLATVLLRA…EKSRKLVPFI (61 aa)).

This sequence belongs to the universal ribosomal protein uS4 family. Part of the 30S ribosomal subunit. Contacts protein S5. The interaction surface between S4 and S5 is involved in control of translational fidelity.

Its function is as follows. One of the primary rRNA binding proteins, it binds directly to 16S rRNA where it nucleates assembly of the body of the 30S subunit. Functionally, with S5 and S12 plays an important role in translational accuracy. This is Small ribosomal subunit protein uS4 from Thermobifida fusca (strain YX).